We begin with the raw amino-acid sequence, 593 residues long: Aspartate--tRNA(Asp/Asn) ligase (593 aa).

Residue E182 participates in L-aspartate binding. Residues 206–209 (QLFK) are aspartate. Residue R228 participates in L-aspartate binding. ATP contacts are provided by residues 228–230 (RDE) and Q237. Residue H455 coordinates L-aspartate. Residue E489 participates in ATP binding. R496 is a binding site for L-aspartate. 541–544 (GLDR) lines the ATP pocket.

It belongs to the class-II aminoacyl-tRNA synthetase family. Type 1 subfamily. Homodimer.

It localises to the cytoplasm. It catalyses the reaction tRNA(Asx) + L-aspartate + ATP = L-aspartyl-tRNA(Asx) + AMP + diphosphate. Its function is as follows. Aspartyl-tRNA synthetase with relaxed tRNA specificity since it is able to aspartylate not only its cognate tRNA(Asp) but also tRNA(Asn). Reaction proceeds in two steps: L-aspartate is first activated by ATP to form Asp-AMP and then transferred to the acceptor end of tRNA(Asp/Asn). This is Aspartate--tRNA(Asp/Asn) ligase from Geotalea uraniireducens (strain Rf4) (Geobacter uraniireducens).